Consider the following 287-residue polypeptide: MKKTIMSFVAVAALSTTAFGAHASAKEITVQKGDTLWGISQKNGVNLKDLKEWNKLTSDKIIAGEKLTISSEETTTTGQYTIKAGDTLSKIAQKFGTTVNNLKVWNNLSSDMIYAGSTLSVKGQATAANTATENAQTNAPQAAPKQEAVQKEQPKQEAVQQQPKQETKAEAETSVNTEEKAVQSNTNNQEASKELTVTATAYTANDGGISGVTATGIDLNKNPNAKVIAVDPNVIPLGSKVYVEGYGEATAADTGGAIKGNKIDVFVPSKSDASNWGVKTVSVKVLN.

Residues M1–A25 form the signal peptide. LysM domains follow at residues K26–I69 and G78–V121. Low complexity predominate over residues T130–A143. A disordered region spans residues T130–K193. Residues Q165–A181 show a composition bias toward basic and acidic residues. Over residues V182–K193 the composition is skewed to polar residues.

Its subcellular location is the secreted. The protein localises to the cell wall. The sequence is that of Cell wall-binding protein YocH (yocH) from Bacillus subtilis (strain 168).